The primary structure comprises 73 residues: Putative membrane protein insertion efficiency factor (73 aa).

This sequence belongs to the UPF0161 family.

It localises to the cell inner membrane. Its function is as follows. Could be involved in insertion of integral membrane proteins into the membrane. This is Putative membrane protein insertion efficiency factor from Jannaschia sp. (strain CCS1).